The chain runs to 445 residues: Argininosuccinate synthase (445 aa).

ATP is bound by residues 17-25 (AFSGGLDTS) and Ala43. Tyr99 provides a ligand contact to L-citrulline. Residues Gly129 and Thr131 each coordinate ATP. Residues Thr131, Asn135, and Asp136 each coordinate L-aspartate. Residue Asn135 participates in L-citrulline binding. Residue Asp136 participates in ATP binding. The L-citrulline site is built by Arg139 and Ser192. Asp194 is a binding site for ATP. Thr201, Glu203, and Glu280 together coordinate L-citrulline.

This sequence belongs to the argininosuccinate synthase family. Type 2 subfamily. In terms of assembly, homotetramer.

It is found in the cytoplasm. The catalysed reaction is L-citrulline + L-aspartate + ATP = 2-(N(omega)-L-arginino)succinate + AMP + diphosphate + H(+). It participates in amino-acid biosynthesis; L-arginine biosynthesis; L-arginine from L-ornithine and carbamoyl phosphate: step 2/3. The polypeptide is Argininosuccinate synthase (Bordetella petrii (strain ATCC BAA-461 / DSM 12804 / CCUG 43448)).